A 172-amino-acid chain; its full sequence is C-phycocyanin beta chain (172 aa).

N4-methylasparagine is present on asparagine 72. Residues cysteine 82 and cysteine 153 each coordinate (2R,3E)-phycocyanobilin.

The protein belongs to the phycobiliprotein family. As to quaternary structure, heterodimer of an alpha and a beta subunit, which further assembles into trimers and the trimers into hexamers. The basic functional unit of phycobiliproteins is a ring-shaped hexamer formed from two back-to-back trimers contacting via the alpha chain subunits. The trimers are composed of alpha/beta subunit heterodimers arranged around a three-fold axis of symmetry. The phycoerythrins also contain a gamma subunit which is located in the center of the hexamer. Contains two covalently linked bilin chromophores.

It is found in the plastid. The protein localises to the chloroplast thylakoid membrane. In terms of biological role, light-harvesting photosynthetic bile pigment-protein from the phycobiliprotein complex (phycobilisome, PBS). Phycocyanin is the major phycobiliprotein in the PBS rod. The sequence is that of C-phycocyanin beta chain (cpcB) from Pyropia yezoensis (Susabi-nori).